The chain runs to 33 residues: Brevinin-2HSb (33 aa).

Cysteines 27 and 33 form a disulfide.

Expressed by the skin glands.

It localises to the secreted. Has antibacterial activity against the Gram-positive bacterium S.aureus ATCC 25923 and the Gram-negative bacterium E.coli ATCC 25726. The sequence is that of Brevinin-2HSb from Odorrana hosii (Hose's rock frog).